Reading from the N-terminus, the 668-residue chain is DNA-directed RNA polymerase subunit beta' (668 aa).

Positions 71, 73, 91, and 94 each coordinate Zn(2+). The Mg(2+) site is built by aspartate 505, aspartate 507, and aspartate 509.

Belongs to the RNA polymerase beta' chain family. RpoC1 subfamily. In terms of assembly, in plastids the minimal PEP RNA polymerase catalytic core is composed of four subunits: alpha, beta, beta', and beta''. When a (nuclear-encoded) sigma factor is associated with the core the holoenzyme is formed, which can initiate transcription. The cofactor is Mg(2+). It depends on Zn(2+) as a cofactor.

The protein resides in the plastid. It localises to the chloroplast. The enzyme catalyses RNA(n) + a ribonucleoside 5'-triphosphate = RNA(n+1) + diphosphate. DNA-dependent RNA polymerase catalyzes the transcription of DNA into RNA using the four ribonucleoside triphosphates as substrates. The chain is DNA-directed RNA polymerase subunit beta' from Mesostigma viride (Green alga).